The sequence spans 432 residues: Small ribosomal subunit protein uS5m (432 aa).

The disordered stretch occupies residues 110 to 130 (AGARKGRGKRTKKKKRKDLNR). The span at 113–127 (RKGRGKRTKKKKRKD) shows a compositional bias: basic residues. An S5 DRBM domain is found at 220 to 284 (FDTRILEVRN…NRAIHYLHYI (65 aa)).

This sequence belongs to the universal ribosomal protein uS5 family. In terms of assembly, component of the mitochondrial ribosome small subunit (28S) which comprises a 12S rRNA and about 30 distinct proteins.

The protein resides in the mitochondrion. The polypeptide is Small ribosomal subunit protein uS5m (Mrps5) (Mus musculus (Mouse)).